The chain runs to 718 residues: Effector protein hopM1 (718 aa).

The span at 1 to 10 shows a compositional bias: gly residues; sequence MIGTRVGGSG. Disordered regions lie at residues 1 to 63 and 683 to 718; these read MIGT…ARLP and GVSSLRDAHKPAETSSPTADDAAAVELTAMEEGRRR. Over residues 11 to 22 the composition is skewed to polar residues; the sequence is STEIVQANQPQP. Over residues 44–60 the composition is skewed to low complexity; sequence ASQSAAQAPESSAAGAA.

As to quaternary structure, interacts with the chaperone ShcM.

The protein resides in the secreted. It localises to the host membrane. In terms of biological role, involved in the suppression of basal resistance and promotion of disease symptoms in plants. May be involved in the inhibition of a host vesicle trafficking pathway. This chain is Effector protein hopM1 (hopM1), found in Pseudomonas syringae pv. syringae (strain B728a).